The primary structure comprises 126 residues: Holo-[acyl-carrier-protein] synthase (126 aa).

Residues Asp-9 and Glu-58 each coordinate Mg(2+).

Belongs to the P-Pant transferase superfamily. AcpS family. It depends on Mg(2+) as a cofactor.

It is found in the cytoplasm. It catalyses the reaction apo-[ACP] + CoA = holo-[ACP] + adenosine 3',5'-bisphosphate + H(+). In terms of biological role, transfers the 4'-phosphopantetheine moiety from coenzyme A to a Ser of acyl-carrier-protein. The polypeptide is Holo-[acyl-carrier-protein] synthase (Salmonella choleraesuis (strain SC-B67)).